A 138-amino-acid polypeptide reads, in one-letter code: Basic phospholipase A2 Cvv-N6 (138 aa).

Residues 1–16 (MRTFWIVALLLVGVEG) form the signal peptide. 7 cysteine pairs are disulfide-bonded: Cys-42-Cys-131, Cys-44-Cys-60, Cys-59-Cys-111, Cys-65-Cys-138, Cys-66-Cys-104, Cys-73-Cys-97, and Cys-91-Cys-102. Ca(2+) is bound by residues Tyr-43, Gly-45, and Gly-47. His-63 is an active-site residue. Residue Asp-64 coordinates Ca(2+). Residue Asp-105 is part of the active site.

It belongs to the phospholipase A2 family. Group II subfamily. D49 sub-subfamily. As to quaternary structure, monomer. Binds to calmodulin. Requires Ca(2+) as cofactor. As to expression, expressed by the venom gland.

Its subcellular location is the secreted. It carries out the reaction a 1,2-diacyl-sn-glycero-3-phosphocholine + H2O = a 1-acyl-sn-glycero-3-phosphocholine + a fatty acid + H(+). With respect to regulation, heparin and wedelolactone inhibit the myotoxic activity. The PLA2 inhibitor, para-bromophenacyl bromide (BPB), inhibits enzymatic and myotoxic activities. Its function is as follows. Snake venom phospholipase A2 (PLA2) that is myotoxic and displays moderate edema-inducing activity in rat paws. Does not show neurotoxic activity. PLA2 catalyzes the calcium-dependent hydrolysis of the 2-acyl groups in 3-sn-phosphoglycerides. This Crotalus viridis viridis (Prairie rattlesnake) protein is Basic phospholipase A2 Cvv-N6.